Reading from the N-terminus, the 754-residue chain is uncharacterized protein (754 aa).

Active-site charge relay system residues include serine 585 and histidine 707. A disordered region spans residues 733–754 (SHAPPPSRKARSAARRSTDPVR).

Belongs to the peptidase S9A family.

This is an uncharacterized protein from Sinorhizobium fredii (strain NBRC 101917 / NGR234).